The following is a 467-amino-acid chain: Glutamate--tRNA ligase (467 aa).

The 'HIGH' region signature appears at 9-19; it reads PSPTGNLHIGS. The short motif at 237 to 241 is the 'KMSKS' region element; the sequence is KISKR. K240 lines the ATP pocket.

It belongs to the class-I aminoacyl-tRNA synthetase family. Glutamate--tRNA ligase type 1 subfamily. As to quaternary structure, monomer.

The protein localises to the cytoplasm. It carries out the reaction tRNA(Glu) + L-glutamate + ATP = L-glutamyl-tRNA(Glu) + AMP + diphosphate. In terms of biological role, catalyzes the attachment of glutamate to tRNA(Glu) in a two-step reaction: glutamate is first activated by ATP to form Glu-AMP and then transferred to the acceptor end of tRNA(Glu). In Buchnera aphidicola subsp. Acyrthosiphon pisum (strain APS) (Acyrthosiphon pisum symbiotic bacterium), this protein is Glutamate--tRNA ligase.